The sequence spans 300 residues: Ribosomal RNA small subunit methyltransferase H (300 aa).

S-adenosyl-L-methionine contacts are provided by residues 33–35 (AGH), Asp52, Phe86, Asp97, and Gln104.

It belongs to the methyltransferase superfamily. RsmH family.

The protein resides in the cytoplasm. It catalyses the reaction cytidine(1402) in 16S rRNA + S-adenosyl-L-methionine = N(4)-methylcytidine(1402) in 16S rRNA + S-adenosyl-L-homocysteine + H(+). In terms of biological role, specifically methylates the N4 position of cytidine in position 1402 (C1402) of 16S rRNA. The sequence is that of Ribosomal RNA small subunit methyltransferase H from Aliarcobacter butzleri (strain RM4018) (Arcobacter butzleri).